A 611-amino-acid polypeptide reads, in one-letter code: Chaperone protein DnaK (611 aa).

Residue T173 is modified to Phosphothreonine; by autocatalysis. Over residues 579 to 592 (AAGQAEGAQGAQDA) the composition is skewed to low complexity. The segment at 579-598 (AAGQAEGAQGAQDAGAKKDN) is disordered.

This sequence belongs to the heat shock protein 70 family.

Functionally, acts as a chaperone. The polypeptide is Chaperone protein DnaK (Bacillus cereus (strain ATCC 10987 / NRS 248)).